A 549-amino-acid polypeptide reads, in one-letter code: Hydroxylamine reductase (549 aa).

Positions 5, 8, 17, and 23 each coordinate [4Fe-4S] cluster. Histidine 244, glutamate 268, cysteine 312, cysteine 403, cysteine 431, cysteine 456, glutamate 491, and lysine 493 together coordinate hybrid [4Fe-2O-2S] cluster. Cysteine 403 is modified (cysteine persulfide).

It belongs to the HCP family. Requires [4Fe-4S] cluster as cofactor. The cofactor is hybrid [4Fe-2O-2S] cluster.

The protein resides in the cytoplasm. The enzyme catalyses A + NH4(+) + H2O = hydroxylamine + AH2 + H(+). In terms of biological role, catalyzes the reduction of hydroxylamine to form NH(3) and H(2)O. The chain is Hydroxylamine reductase from Caldanaerobacter subterraneus subsp. tengcongensis (strain DSM 15242 / JCM 11007 / NBRC 100824 / MB4) (Thermoanaerobacter tengcongensis).